A 589-amino-acid chain; its full sequence is Poly(3-hydroxyalkanoate) polymerase subunit PhaC (589 aa).

The disordered stretch occupies residues 1–23 (MATGKGAAASTQEGKSQPFKVTP). The active site involves cysteine 319.

This sequence belongs to the PHA/PHB synthase family. Type I PhaC subfamily. As to quaternary structure, monomer.

The protein resides in the cytoplasm. It carries out the reaction (3R)-3-hydroxybutanoyl-CoA + [(3R)-hydroxybutanoate](n) = [(3R)-hydroxybutanoate](n+1) + CoA. It participates in biopolymer metabolism; poly-(R)-3-hydroxybutanoate biosynthesis. Polymerizes (R)-3-hydroxybutyryl-CoA to create polyhydroxybutyrate (PHB) which consists of thousands of hydroxybutyrate molecules linked end to end. PHB serves as an intracellular energy reserve material when cells grow under conditions of nutrient limitation. The sequence is that of Poly(3-hydroxyalkanoate) polymerase subunit PhaC from Cupriavidus necator (strain ATCC 17699 / DSM 428 / KCTC 22496 / NCIMB 10442 / H16 / Stanier 337) (Ralstonia eutropha).